Consider the following 333-residue polypeptide: Ketol-acid reductoisomerase (NADP(+)) (333 aa).

The 179-residue stretch at 1-179 (MFYDDDADLT…GGTRAGVIKT (179 aa)) folds into the KARI N-terminal Rossmann domain. NADP(+) contacts are provided by residues 22–25 (YGSQ), Lys-45, Ser-48, Ser-50, and 80–83 (DTAQ). Residue His-105 is part of the active site. Residue Gly-131 participates in NADP(+) binding. A KARI C-terminal knotted domain is found at 180-325 (TFKDETETDL…KRLRDLMSWV (146 aa)). 4 residues coordinate Mg(2+): Asp-188, Glu-192, Glu-224, and Glu-228. Ser-249 contributes to the substrate binding site.

This sequence belongs to the ketol-acid reductoisomerase family. Mg(2+) serves as cofactor.

The enzyme catalyses (2R)-2,3-dihydroxy-3-methylbutanoate + NADP(+) = (2S)-2-acetolactate + NADPH + H(+). It catalyses the reaction (2R,3R)-2,3-dihydroxy-3-methylpentanoate + NADP(+) = (S)-2-ethyl-2-hydroxy-3-oxobutanoate + NADPH + H(+). It participates in amino-acid biosynthesis; L-isoleucine biosynthesis; L-isoleucine from 2-oxobutanoate: step 2/4. Its pathway is amino-acid biosynthesis; L-valine biosynthesis; L-valine from pyruvate: step 2/4. Its function is as follows. Involved in the biosynthesis of branched-chain amino acids (BCAA). Catalyzes an alkyl-migration followed by a ketol-acid reduction of (S)-2-acetolactate (S2AL) to yield (R)-2,3-dihydroxy-isovalerate. In the isomerase reaction, S2AL is rearranged via a Mg-dependent methyl migration to produce 3-hydroxy-3-methyl-2-ketobutyrate (HMKB). In the reductase reaction, this 2-ketoacid undergoes a metal-dependent reduction by NADPH to yield (R)-2,3-dihydroxy-isovalerate. This Mycobacterium avium protein is Ketol-acid reductoisomerase (NADP(+)).